The sequence spans 257 residues: Fructose-2,6-bisphosphatase TIGAR B (257 aa).

H11 serves as the catalytic Tele-phosphohistidine intermediate. E89 functions as the Proton donor/acceptor in the catalytic mechanism.

The protein belongs to the phosphoglycerate mutase family.

It is found in the cytoplasm. The protein resides in the nucleus. It localises to the mitochondrion. It carries out the reaction beta-D-fructose 2,6-bisphosphate + H2O = beta-D-fructose 6-phosphate + phosphate. Functionally, fructose-bisphosphatase hydrolyzing fructose-2,6-bisphosphate as well as fructose-1,6-bisphosphate. Acts as a negative regulator of glycolysis by lowering intracellular levels of fructose-2,6-bisphosphate in a p53/TP53-dependent manner, resulting in the pentose phosphate pathway (PPP) activation and NADPH production. Contributes to the generation of reduced glutathione to cause a decrease in intracellular reactive oxygen species (ROS) content, correlating with its ability to protect cells from oxidative or metabolic stress-induced cell death. May play a role in mitophagy inhibition. The sequence is that of Fructose-2,6-bisphosphatase TIGAR B from Danio rerio (Zebrafish).